Here is a 455-residue protein sequence, read N- to C-terminus: Chromosomal replication initiator protein DnaA (455 aa).

The interval 1–75 is domain I, interacts with DnaA modulators; sequence MDTNNNIEKE…EILSQNKVGM (75 aa). A domain II region spans residues 75–106; that stretch reads MHLAHSVDVRIEVAPKIQINAQANINYKAIKT. The segment at 107–321 is domain III, AAA+ region; the sequence is SVKDSYTFEN…GAIIKISVNA (215 aa). Positions 151, 153, 154, and 155 each coordinate ATP. Positions 322 to 455 are domain IV, binds dsDNA; sequence NLMNAPIDLN…DKKTAFNSSE (134 aa).

Belongs to the DnaA family. In terms of assembly, oligomerizes as a right-handed, spiral filament on DNA at oriC.

It localises to the cytoplasm. Its function is as follows. Plays an essential role in the initiation and regulation of chromosomal replication. ATP-DnaA binds to the origin of replication (oriC) to initiate formation of the DNA replication initiation complex once per cell cycle. Binds the DnaA box (a 9 base pair repeat at the origin) and separates the double-stranded (ds)DNA. Forms a right-handed helical filament on oriC DNA; dsDNA binds to the exterior of the filament while single-stranded (ss)DNA is stabiized in the filament's interior. The ATP-DnaA-oriC complex binds and stabilizes one strand of the AT-rich DNA unwinding element (DUE), permitting loading of DNA polymerase. After initiation quickly degrades to an ADP-DnaA complex that is not apt for DNA replication. Binds acidic phospholipids. The polypeptide is Chromosomal replication initiator protein DnaA (Helicobacter pylori (strain P12)).